The chain runs to 282 residues: Transcription factor BC1 (282 aa).

The disordered stretch occupies residues 34–123 (TTAPAIPEDA…ATDSHSLAER (90 aa)). Polar residues predominate over residues 45–55 (METSSVVLDTS). Residues 75–84 (HSKEAKENGR) are compositionally biased toward basic and acidic residues. Residues 109-116 (ARRGQATD) carry the Nuclear localization signal motif. Residues 113–126 (QATDSHSLAERVRR) form a basic motif; degenerate region. A bHLH domain is found at 113–163 (QATDSHSLAERVRRERISERMRMLQALVPGCDKVTGKALILDEIINYVQSL). The tract at residues 127–163 (ERISERMRMLQALVPGCDKVTGKALILDEIINYVQSL) is helix-loop-helix motif. The tract at residues 219–251 (PAQSHAIMDTSNTSPTPYTLQVQGGSNNNSLSQ) is disordered.

Belongs to the bHLH protein family. In terms of assembly, homodimer. Component of a nuclear cell elongation controlling complex made of ILI5/BUL1, LO9-177 and BC1. Interacts with ILI5/BUL1 only in the presence of LO9-177. Interacts with IBH1. Binds to LO9-177 in the nucleus. Interacts with BCL1. In terms of tissue distribution, preferentially present in anthers and leaves lamina joints. Expressed in seedlings, leaves sheaths, collars and panicles.

The protein localises to the nucleus. In terms of biological role, transcription activator that contributes, together with LO9-177 and ILI5/BUL1, to the promotion of leaf inclination and grain size by modulating cell elongation. Involved in the RLI1-dependent modulation of leaf inclination by promoting lamina joint cell elongation, especially in response to phosphate (Pi) availability. The sequence is that of Transcription factor BC1 from Oryza sativa subsp. japonica (Rice).